Consider the following 921-residue polypeptide: Dual serine/threonine and tyrosine protein kinase (921 aa).

A Protein kinase domain is found at 645–899 (PKLGRELGRG…PLLGIVEPSL (255 aa)). Residues 651–659 (LGRGQYGVV) and Lys-674 each bind ATP. Catalysis depends on Asp-770, which acts as the Proton acceptor.

Belongs to the protein kinase superfamily. Ser/Thr protein kinase family.

It is found in the cytoplasm. The protein localises to the cell membrane. It localises to the apical cell membrane. Its subcellular location is the basolateral cell membrane. The protein resides in the cell junction. It catalyses the reaction L-seryl-[protein] + ATP = O-phospho-L-seryl-[protein] + ADP + H(+). It carries out the reaction L-threonyl-[protein] + ATP = O-phospho-L-threonyl-[protein] + ADP + H(+). The enzyme catalyses L-tyrosyl-[protein] + ATP = O-phospho-L-tyrosyl-[protein] + ADP + H(+). Its function is as follows. May act as a positive regulator of ERK phosphorylation downstream of fibroblast growth factor-receptor activation. May induce both caspase-dependent apoptosis and caspase-independent cell death. May play a role in the embryonic development. This chain is Dual serine/threonine and tyrosine protein kinase (dstyk), found in Takifugu rubripes (Japanese pufferfish).